Reading from the N-terminus, the 505-residue chain is Activin receptor type-1B (505 aa).

The N-terminal stretch at 1–23 (MAESAGASSFFPLVVLLLAGSGG) is a signal peptide. At 24-126 (SGPRGIQALL…EHPSMWGPVE (103 aa)) the chain is on the extracellular side. N-linked (GlcNAc...) asparagine glycosylation occurs at asparagine 43. A helical membrane pass occupies residues 127-149 (LVGIIAGPVFLLFLIIIIVFLVI). Over 150–505 (NYHQRVYHNR…QLSVQEDVKI (356 aa)) the chain is Cytoplasmic. Residues 177 to 206 (KTLQDLVYDLSTSGSGSGLPLFVQRTVART) form the GS domain. A Protein kinase domain is found at 207–497 (IVLQEIIGKG…LRIKKTLSQL (291 aa)). Residues 213 to 221 (IGKGRFGEV) and lysine 234 each bind ATP. Residue aspartate 335 is the Proton acceptor of the active site. Residue tyrosine 380 is modified to Phosphotyrosine.

It belongs to the protein kinase superfamily. TKL Ser/Thr protein kinase family. TGFB receptor subfamily. In terms of assembly, forms an activin receptor complex with activin receptor type-2 (ACVR2A or ACVR2B). Part of a complex consisting of MAGI2/ARIP1, ACVR2A, ACVR1B and SMAD3. Interacts with SMAD2 and SMAD3. Interacts with SMAD7. Interacts with FKBP1A. Interacts with IGSF1. Interacts with CRIPTO. Interacts with TDP2. Interacts with TSC22D1/TSC-22. Mg(2+) is required as a cofactor. It depends on Mn(2+) as a cofactor. Post-translationally, autophosphorylated. Phosphorylated by activin receptor type-2 (ACVR2A or ACVR2B) in response to activin-binding at serine and threonine residues in the GS domain. Phosphorylation of ACVR1B by activin receptor type-2 regulates association with SMAD7. In terms of processing, ubiquitinated. Level of ubiquitination is regulated by the SMAD7-SMURF1 complex. Ubiquitinated. In terms of tissue distribution, urogenital ridge, testis, ovary, brain and lungs.

Its subcellular location is the cell membrane. The catalysed reaction is L-threonyl-[receptor-protein] + ATP = O-phospho-L-threonyl-[receptor-protein] + ADP + H(+). It carries out the reaction L-seryl-[receptor-protein] + ATP = O-phospho-L-seryl-[receptor-protein] + ADP + H(+). Its activity is regulated as follows. Activin receptor type-2 (ACVR2A or ACVR2B) activates the type-1 receptor through phosphorylation of its regulatory GS domain. Its function is as follows. Transmembrane serine/threonine kinase activin type-1 receptor forming an activin receptor complex with activin receptor type-2 (ACVR2A or ACVR2B). Transduces the activin signal from the cell surface to the cytoplasm and is thus regulating a many physiological and pathological processes including neuronal differentiation and neuronal survival, hair follicle development and cycling, FSH production by the pituitary gland, wound healing, extracellular matrix production, immunosuppression and carcinogenesis. Activin is also thought to have a paracrine or autocrine role in follicular development in the ovary. Within the receptor complex, type-2 receptors (ACVR2A and/or ACVR2B) act as a primary activin receptors whereas the type-1 receptors like ACVR1B act as downstream transducers of activin signals. Activin binds to type-2 receptor at the plasma membrane and activates its serine-threonine kinase. The activated receptor type-2 then phosphorylates and activates the type-1 receptor such as ACVR1B. Once activated, the type-1 receptor binds and phosphorylates the SMAD proteins SMAD2 and SMAD3, on serine residues of the C-terminal tail. Soon after their association with the activin receptor and subsequent phosphorylation, SMAD2 and SMAD3 are released into the cytoplasm where they interact with the common partner SMAD4. This SMAD complex translocates into the nucleus where it mediates activin-induced transcription. Inhibitory SMAD7, which is recruited to ACVR1B through FKBP1A, can prevent the association of SMAD2 and SMAD3 with the activin receptor complex, thereby blocking the activin signal. Activin signal transduction is also antagonized by the binding to the receptor of inhibin-B via the IGSF1 inhibin coreceptor. ACVR1B also phosphorylates TDP2. This chain is Activin receptor type-1B (Acvr1b), found in Rattus norvegicus (Rat).